A 218-amino-acid polypeptide reads, in one-letter code: Large ribosomal subunit protein bL25 (218 aa).

It belongs to the bacterial ribosomal protein bL25 family. CTC subfamily. As to quaternary structure, part of the 50S ribosomal subunit; part of the 5S rRNA/L5/L18/L25 subcomplex. Contacts the 5S rRNA. Binds to the 5S rRNA independently of L5 and L18.

This is one of the proteins that binds to the 5S RNA in the ribosome where it forms part of the central protuberance. The polypeptide is Large ribosomal subunit protein bL25 (Gluconobacter oxydans (strain 621H) (Gluconobacter suboxydans)).